A 2280-amino-acid chain; its full sequence is Metacaspase-3 (2280 aa).

Disordered regions lie at residues 56–83 (ILSK…DRED), 202–284 (YSTE…THRG), 791–819 (YKNS…MVNN), 931–954 (DDNS…RYDK), 994–1015 (SGKY…DDSE), 1278–1306 (KTNN…NPFI), and 1469–1500 (KAPT…NANA). The span at 63–83 (NKNENIKKRINEKDNDTDRED) shows a compositional bias: basic and acidic residues. 2 stretches are compositionally biased toward polar residues: residues 205–219 (EHTQ…TSKR) and 228–278 (DKAQ…NRKG). Composition is skewed to low complexity over residues 793 to 819 (NSMN…MVNN) and 931 to 941 (DDNSVQDSFFS). Composition is skewed to low complexity over residues 1278-1303 (KTNN…NNSN) and 1482-1500 (APTN…NANA).

It belongs to the peptidase C14B family.

Functionally, protease that cleaves specifically after arginine or lysine residues. This chain is Metacaspase-3, found in Plasmodium falciparum (isolate 3D7).